Here is a 114-residue protein sequence, read N- to C-terminus: UPF0757 protein YmgG (114 aa).

It belongs to the UPF0757 family.

This chain is UPF0757 protein YmgG, found in Escherichia fergusonii (strain ATCC 35469 / DSM 13698 / CCUG 18766 / IAM 14443 / JCM 21226 / LMG 7866 / NBRC 102419 / NCTC 12128 / CDC 0568-73).